A 279-amino-acid polypeptide reads, in one-letter code: Pantothenate synthetase (279 aa).

An ATP-binding site is contributed by 26–33; that stretch reads MGNLHEGH. The Proton donor role is filled by His-33. Position 57 (Gln-57) interacts with (R)-pantoate. Residue Gln-57 coordinates beta-alanine. Position 144–147 (144–147) interacts with ATP; the sequence is GKKD. Gln-150 lines the (R)-pantoate pocket. Residues Val-173 and 181-184 each bind ATP; that span reads LSSR.

It belongs to the pantothenate synthetase family. In terms of assembly, homodimer.

It localises to the cytoplasm. It carries out the reaction (R)-pantoate + beta-alanine + ATP = (R)-pantothenate + AMP + diphosphate + H(+). It participates in cofactor biosynthesis; (R)-pantothenate biosynthesis; (R)-pantothenate from (R)-pantoate and beta-alanine: step 1/1. Its function is as follows. Catalyzes the condensation of pantoate with beta-alanine in an ATP-dependent reaction via a pantoyl-adenylate intermediate. This is Pantothenate synthetase from Burkholderia vietnamiensis (strain G4 / LMG 22486) (Burkholderia cepacia (strain R1808)).